The chain runs to 668 residues: tRNA 5-methylaminomethyl-2-thiouridine biosynthesis bifunctional protein MnmC (668 aa).

The tRNA (mnm(5)s(2)U34)-methyltransferase stretch occupies residues 1 to 245 (MKHYSIQPAN…KREMLCGVME (245 aa)). Residues 270 to 668 (IGGGIASALL…LLKGKAVKAG (399 aa)) are FAD-dependent cmnm(5)s(2)U34 oxidoreductase.

It in the N-terminal section; belongs to the methyltransferase superfamily. tRNA (mnm(5)s(2)U34)-methyltransferase family. This sequence in the C-terminal section; belongs to the DAO family. The cofactor is FAD.

It localises to the cytoplasm. The enzyme catalyses 5-aminomethyl-2-thiouridine(34) in tRNA + S-adenosyl-L-methionine = 5-methylaminomethyl-2-thiouridine(34) in tRNA + S-adenosyl-L-homocysteine + H(+). Functionally, catalyzes the last two steps in the biosynthesis of 5-methylaminomethyl-2-thiouridine (mnm(5)s(2)U) at the wobble position (U34) in tRNA. Catalyzes the FAD-dependent demodification of cmnm(5)s(2)U34 to nm(5)s(2)U34, followed by the transfer of a methyl group from S-adenosyl-L-methionine to nm(5)s(2)U34, to form mnm(5)s(2)U34. In Escherichia coli (strain K12 / DH10B), this protein is tRNA 5-methylaminomethyl-2-thiouridine biosynthesis bifunctional protein MnmC.